A 336-amino-acid polypeptide reads, in one-letter code: Serpentine receptor class beta-15 (336 aa).

The next 7 helical transmembrane spans lie at 24 to 44, 57 to 77, 109 to 129, 142 to 162, 186 to 206, 237 to 257, and 276 to 296; these read LFIHLFVSISSIIPLIYFVIF, FLFSAYFVSVFLFSVDFAIIS, IFMSLSTFFPISITIERFIAM, LGPILTGCNILLDLLIVFFIY, FTFFWVMFFLNLINFTFNSYL, VFVVFCHVILFGFYVIGIMIL, and GAFTTMISLYNLVVGSVAVYL.

Belongs to the nematode receptor-like protein srb family.

It localises to the membrane. This chain is Serpentine receptor class beta-15 (srb-15), found in Caenorhabditis elegans.